We begin with the raw amino-acid sequence, 309 residues long: Lipoyl synthase (309 aa).

7 residues coordinate [4Fe-4S] cluster: cysteine 37, cysteine 42, cysteine 48, cysteine 67, cysteine 71, cysteine 74, and serine 281. One can recognise a Radical SAM core domain in the interval 53 to 270; it reads DGPGTATFML…RVAETEFGFL (218 aa).

It belongs to the radical SAM superfamily. Lipoyl synthase family. [4Fe-4S] cluster serves as cofactor.

The protein localises to the cytoplasm. It carries out the reaction [[Fe-S] cluster scaffold protein carrying a second [4Fe-4S](2+) cluster] + N(6)-octanoyl-L-lysyl-[protein] + 2 oxidized [2Fe-2S]-[ferredoxin] + 2 S-adenosyl-L-methionine + 4 H(+) = [[Fe-S] cluster scaffold protein] + N(6)-[(R)-dihydrolipoyl]-L-lysyl-[protein] + 4 Fe(3+) + 2 hydrogen sulfide + 2 5'-deoxyadenosine + 2 L-methionine + 2 reduced [2Fe-2S]-[ferredoxin]. It functions in the pathway protein modification; protein lipoylation via endogenous pathway; protein N(6)-(lipoyl)lysine from octanoyl-[acyl-carrier-protein]: step 2/2. Catalyzes the radical-mediated insertion of two sulfur atoms into the C-6 and C-8 positions of the octanoyl moiety bound to the lipoyl domains of lipoate-dependent enzymes, thereby converting the octanoylated domains into lipoylated derivatives. In Natronomonas pharaonis (strain ATCC 35678 / DSM 2160 / CIP 103997 / JCM 8858 / NBRC 14720 / NCIMB 2260 / Gabara) (Halobacterium pharaonis), this protein is Lipoyl synthase.